Here is a 196-residue protein sequence, read N- to C-terminus: Ankyrin repeat domain-containing protein 66 (196 aa).

ANK repeat units follow at residues 7 to 37 (SDMTKLHQAVAAGDYSLVKKILKKGLCDPNY), 43 to 72 (NDRTPLHWAAIKGQMEVIRLLIEYGARPCL), and 76 to 105 (VGWTPAHFAAEAGHLNILKTLHALHAAIDA). Positions 152-196 (ERDEDWDAKKRELELSLPSLNQNMNKKNKKSRGPTRPSNTKGRRV) are disordered. Polar residues predominate over residues 187–196 (RPSNTKGRRV).

In Homo sapiens (Human), this protein is Ankyrin repeat domain-containing protein 66 (ANKRD66).